We begin with the raw amino-acid sequence, 99 residues long: U1-theraphotoxin-Tal1a (99 aa).

The first 22 residues, 1-22, serve as a signal peptide directing secretion; it reads MNTIQVIIFAVVLVLTVTVGQA. Residues 23–57 constitute a propeptide that is removed on maturation; sequence DEDSAETSLLRKLKEAEASLFGQHLEESQHSREKR. 3 cysteine pairs are disulfide-bonded: Cys58-Cys73, Cys65-Cys78, and Cys72-Cys93. Serine amide is present on Ser98.

This sequence belongs to the neurotoxin 14 (magi-1) family. 08 (Ltx-4) subfamily. As to expression, expressed by the venom gland.

Its subcellular location is the secreted. Its function is as follows. Insecticidal toxin that shows strong lethal effects on American cockroaches (P.americana) and common mealbeetle (T.molitor). Possibly acts by blocking ion channel currents. Also shows significant analgesic effects in mice models of pain including abdominal writhing induced by acetic acid and formalin-induced paw licking tests. In addition, exerts marked inhibition of proliferation of some human tumor cell lines including C8166, Molt-4, A-549, BIU-87, T24, and Calu-6. This is U1-theraphotoxin-Tal1a from Tliltocatl albopilosus (Curlyhair tarantula).